A 380-amino-acid chain; its full sequence is Cytochrome b (380 aa).

Transmembrane regions (helical) follow at residues 34–54 (FGSLLGICLLTQILTGLLLAT), 78–99 (WLIRNLHANGASFFFICIYLHI), 114–134 (WNTGVILLLALMATAFVGYVL), and 179–199 (FFALHFLLPFMIAGLAFIHLT). Heme b is bound by residues H84 and H98. H183 and H197 together coordinate heme b. H202 provides a ligand contact to a ubiquinone. 4 consecutive transmembrane segments (helical) span residues 227 to 247 (LKDILGFIIMFLPLTTLALFS), 289 to 309 (LGGVLALAASVLVLFLTPLLH), 321 to 341 (LSQLLFWTLVANLLILTWVGS), and 348 to 368 (FIIIGQLASLAYFTILLLLFP).

This sequence belongs to the cytochrome b family. In terms of assembly, the cytochrome bc1 complex contains 11 subunits: 3 respiratory subunits (MT-CYB, CYC1 and UQCRFS1), 2 core proteins (UQCRC1 and UQCRC2) and 6 low-molecular weight proteins (UQCRH/QCR6, UQCRB/QCR7, UQCRQ/QCR8, UQCR10/QCR9, UQCR11/QCR10 and a cleavage product of UQCRFS1). This cytochrome bc1 complex then forms a dimer. The cofactor is heme b.

The protein resides in the mitochondrion inner membrane. Its function is as follows. Component of the ubiquinol-cytochrome c reductase complex (complex III or cytochrome b-c1 complex) that is part of the mitochondrial respiratory chain. The b-c1 complex mediates electron transfer from ubiquinol to cytochrome c. Contributes to the generation of a proton gradient across the mitochondrial membrane that is then used for ATP synthesis. The protein is Cytochrome b (MT-CYB) of Uria lomvia (Thick-billed murre).